A 303-amino-acid chain; its full sequence is Coenzyme PQQ synthesis protein B (303 aa).

Belongs to the PqqB family.

Its pathway is cofactor biosynthesis; pyrroloquinoline quinone biosynthesis. May be involved in the transport of PQQ or its precursor to the periplasm. This chain is Coenzyme PQQ synthesis protein B, found in Acinetobacter baumannii (strain ACICU).